We begin with the raw amino-acid sequence, 1400 residues long: Bromodomain-containing protein 4 (1400 aa).

Residues 1–58 (MSTESGPGTRLRNLPVMGDGLETSQMSTTQAQAQPQPANAASTNPPPPETSNPNKPKR) form a disordered region. Low complexity predominate over residues 23-43 (TSQMSTTQAQAQPQPANAAST). The region spanning 58 to 164 (RQTNQLQYLL…KLFLQKINEL (107 aa)) is the Bromo 1 domain. K99 is covalently cross-linked (Glycyl lysine isopeptide (Lys-Gly) (interchain with G-Cter in SUMO2)). Disordered stretches follow at residues 176–353 (AKGR…KISE) and 461–616 (EPEE…YEEK). The segment covering 197 to 212 (PNTTQASTSPQTQTPQ) has biased composition (low complexity). The span at 244 to 267 (PPQPLQTPSPVPPQPPPPPAPVPQ) shows a compositional bias: pro residues. Positions 321–337 (PRRESSRPVKPPKKDVP) are enriched in basic and acidic residues. The region spanning 349-458 (SKISEQLKCC…DVFEMRFAKM (110 aa)) is the Bromo 2 domain. Phosphoserine is present on S471. Low complexity predominate over residues 479–498 (KVVAPPSSSDSSSDSSSDSD). Phosphoserine; by CK2 is present on residues S485, S489, and S493. An NPS region region spans residues 485–504 (SSSDSSSDSSSDSDSSTDDS). A Phosphoserine modification is found at S495. A phosphoserine; by CK2 mark is found at S499, S500, and S504. A BID region region spans residues 525–580 (QLAALSQPQQNKPKKKEKDKKEKKKEKHKKKEEVEENKKSKTKELPPKKTKKNNSS). Residues 536–554 (KPKKKEKDKKEKKKEKHKK) show a composition bias toward basic residues. The span at 555-571 (KEEVEENKKSKTKELPP) shows a compositional bias: basic and acidic residues. Residue K586 forms a Glycyl lysine isopeptide (Lys-Gly) (interchain with G-Cter in SUMO2) linkage. Positions 601–683 (ESEEEDKCKP…SCLRKKRKPQ (83 aa)) constitute an NET domain. Position 602 is a phosphoserine (S602). Basic and acidic residues predominate over residues 606–616 (DKCKPMSYEEK). Glycyl lysine isopeptide (Lys-Gly) (interchain with G-Cter in SUMO2) cross-links involve residues K646 and K695. Positions 675–1125 (CLRKKRKPQA…GCPPASPAAV (451 aa)) are disordered. A compositionally biased stretch (low complexity) spans 700–713 (SSSESESTSESSSS). The segment covering 725 to 745 (KSKKKGHTGRDQKKHHHHHHP) has biased composition (basic residues). Composition is skewed to pro residues over residues 748 to 787 (QPAPAPVPQQPPPPPQQPPPPPPPQQQQQQPPPPPPPPSM), 835 to 848 (PELPPHLPQPPEHS), 883 to 892 (PPKPTRPPAV), and 900 to 909 (PLLPQPPMAQ). Residues 928 to 938 (MQMQLYLQQLQ) are compositionally biased toward low complexity. Pro residues-rich tracts occupy residues 955–966 (QPPPPLPPPPHP), 975–1000 (PQPPPPPPPQPQPPPQQQHQPPPRPV), and 1013–1037 (QPPPPPGQQPTHPPPGQQPPPPQPA). Positions 1050 to 1400 (RHHKSDPYSA…LLSIFEENLF (351 aa)) are C-terminal (CTD) region. K1053 participates in a covalent cross-link: Glycyl lysine isopeptide (Lys-Gly) (interchain with G-Cter in SUMO2). A compositionally biased stretch (polar residues) spans 1075–1084 (QMPQFQSLTH). Positions 1085 to 1095 (QSPPQQNVQPK) are enriched in low complexity. Residue K1147 is modified to N6-acetyllysine; alternate. A Glycyl lysine isopeptide (Lys-Gly) (interchain with G-Cter in SUMO1); alternate cross-link involves residue K1147. Residue K1147 forms a Glycyl lysine isopeptide (Lys-Gly) (interchain with G-Cter in SUMO2); alternate linkage. Phosphoserine occurs at positions 1153 and 1162. The tract at residues 1155–1377 (IIRSEPFSTS…KREQERRRRE (223 aa)) is disordered. Positions 1211-1232 (PDKDKQKQEPKTPVAPKKDLKI) are enriched in basic and acidic residues. K1233 is covalently cross-linked (Glycyl lysine isopeptide (Lys-Gly) (interchain with G-Cter in SUMO2)). A phosphoserine mark is found at S1237 and S1240. The segment covering 1247-1258 (TTPSSTAKSSSD) has biased composition (low complexity). Positions 1259 to 1320 (SFEHFRRAAR…AHEEARRRQE (62 aa)) are enriched in basic and acidic residues. Residues 1321 to 1357 (QQQQQQQQRQEQQQQQQQAAAVAAASAPQAQSSQPQS) show a composition bias toward low complexity. Positions 1361 to 1377 (QQRELARKREQERRRRE) are enriched in basic and acidic residues.

The protein belongs to the BET family. In terms of assembly, binds acetylated histone H4. Interacts with p53/TP53; the interaction is direct. Interacts (via CTD region) with CDK9 and CCNT1, acting as an associated component of P-TEFb complex. Interacts with RELA (when acetylated at 'Lys-310'). Interacts (via NET domain) with NSD3, CHD4, BICRA and ATAD5. The interaction with BICRA bridges BRD4 to the GBAF complex. Interacts (via NET domain) with JMJD6 (via JmjC and N-terminal domains); the interaction is stronger in presence of ssRNA and recruits JMJD6 on distal enhancers. Interacts with NSD3. Interacts with NIPBL. Phosphorylation by CK2 disrupt the intramolecular binding between the bromo domain 2 and the NPS region and promotes binding between the NPS and the BID regions, leading to activate the protein and promote binding to acetylated histones. In absence of phosphorylation, BRD4 does not localize to p53/TP53 target gene promoters, phosphorylation promoting recruitment to p53/TP53 target promoters.

Its subcellular location is the nucleus. It is found in the chromosome. In terms of biological role, chromatin reader protein that recognizes and binds acetylated histones and plays a key role in transmission of epigenetic memory across cell divisions and transcription regulation. Remains associated with acetylated chromatin throughout the entire cell cycle and provides epigenetic memory for postmitotic G1 gene transcription by preserving acetylated chromatin status and maintaining high-order chromatin structure. During interphase, plays a key role in regulating the transcription of signal-inducible genes by associating with the P-TEFb complex and recruiting it to promoters. Also recruits P-TEFb complex to distal enhancers, so called anti-pause enhancers in collaboration with JMJD6. BRD4 and JMJD6 are required to form the transcriptionally active P-TEFb complex by displacing negative regulators such as HEXIM1 and 7SKsnRNA complex from P-TEFb, thereby transforming it into an active form that can then phosphorylate the C-terminal domain (CTD) of RNA polymerase II. Regulates differentiation of naive CD4(+) T-cells into T-helper Th17 by promoting recruitment of P-TEFb to promoters. Promotes phosphorylation of 'Ser-2' of the C-terminal domain (CTD) of RNA polymerase II. According to a report, directly acts as an atypical protein kinase and mediates phosphorylation of 'Ser-2' of the C-terminal domain (CTD) of RNA polymerase II; these data however need additional evidences in vivo. In addition to acetylated histones, also recognizes and binds acetylated RELA, leading to further recruitment of the P-TEFb complex and subsequent activation of NF-kappa-B. Also acts as a regulator of p53/TP53-mediated transcription: following phosphorylation by CK2, recruited to p53/TP53 specific target promoters. The protein is Bromodomain-containing protein 4 (Brd4) of Mus musculus (Mouse).